The chain runs to 78 residues: Sec-independent protein translocase protein TatA (78 aa).

The helical transmembrane segment at 1-21 (MGSLSIWHWIVVIGVVLLLFG) threads the bilayer. The segment covering 42-60 (GLQDDEKTAEKPEPVKSID) has biased composition (basic and acidic residues). Residues 42–78 (GLQDDEKTAEKPEPVKSIDHTAPPAAAPRTDVGSKVV) form a disordered region.

It belongs to the TatA/E family. In terms of assembly, the Tat system comprises two distinct complexes: a TatABC complex, containing multiple copies of TatA, TatB and TatC subunits, and a separate TatA complex, containing only TatA subunits. Substrates initially bind to the TatABC complex, which probably triggers association of the separate TatA complex to form the active translocon.

Its subcellular location is the cell inner membrane. In terms of biological role, part of the twin-arginine translocation (Tat) system that transports large folded proteins containing a characteristic twin-arginine motif in their signal peptide across membranes. TatA could form the protein-conducting channel of the Tat system. The sequence is that of Sec-independent protein translocase protein TatA from Rhodopseudomonas palustris (strain BisB18).